A 439-amino-acid polypeptide reads, in one-letter code: MARIFQPKKKTQLNTRHQAVQVERLDHHGAGIAYLKKKPLFIDGALPGEEVVTQLVEEKSKFARGKLIKILKPSDARVEPFCPHYHECGGCDLQHLNYDQQLTHKQQTLRQLMRKFAGSDIDLDAPVLGESLGYRRRARVSLFVDKKTRQLHFGFRKKQSKQIAQVTDCPVLAPELNVLLPEIYSVLKAFKKPDQLGHVELVLGDNGPCITLRHLSNLADDEVSALVELATRHQASLYLMPETDQLNLVAGEVPFYQEAGVKIPFDPNNFIQVNQAVNQKMVEQAIKWLDPQSDERVLDLFCGLGNFSLPIAKRAKHVVGVEGVAEMVEKASNNASLNQINNAQFYHANLEQDFDGQAWAAEKFDKVLLDPARAGASGIIDQVSALGAQRVVYVSCNPATLARDSQSLLDQGYQLTKLGMLDMFPHTSHLESMALFEKS.

In terms of domain architecture, TRAM spans Lys10–Lys69. Residues Cys82, Cys88, Cys91, and Cys169 each coordinate [4Fe-4S] cluster. Gln272, Phe301, Asn306, Glu322, Asn349, and Asp370 together coordinate S-adenosyl-L-methionine. The Nucleophile role is filled by Cys396.

It belongs to the class I-like SAM-binding methyltransferase superfamily. RNA M5U methyltransferase family. RlmD subfamily.

The catalysed reaction is uridine(1939) in 23S rRNA + S-adenosyl-L-methionine = 5-methyluridine(1939) in 23S rRNA + S-adenosyl-L-homocysteine + H(+). Its function is as follows. Catalyzes the formation of 5-methyl-uridine at position 1939 (m5U1939) in 23S rRNA. In Vibrio parahaemolyticus serotype O3:K6 (strain RIMD 2210633), this protein is 23S rRNA (uracil(1939)-C(5))-methyltransferase RlmD.